The primary structure comprises 130 residues: T-cell receptor beta chain V region A20.2.25 (130 aa).

An N-terminal signal peptide occupies residues 1–21 (MSCRLLLYVSLCLVETALMNT). Residues 22–112 (KITQSPRYLI…DSAVYFCASS (91 aa)) are v segment. N-linked (GlcNAc...) asparagine glycosylation is found at N36 and N75. Residues 113–115 (HGE) are d segment. Residues 116–130 (NTEVFFGKGTTLTVV) form a j segment region.

In Mus musculus (Mouse), this protein is T-cell receptor beta chain V region A20.2.25.